Reading from the N-terminus, the 437-residue chain is Serine carboxypeptidase-like 7 (437 aa).

Positions 1–25 (MANDYVSTVLLLLSLLIFLSQRTDS) are cleaved as a signal peptide. Disulfide bonds link cysteine 84–cysteine 327, cysteine 248–cysteine 262, and cysteine 286–cysteine 293. N-linked (GlcNAc...) asparagine glycosylation is present at asparagine 105. Serine 180 is an active-site residue. Asparagine 346 is a glycosylation site (N-linked (GlcNAc...) asparagine). The active site involves aspartate 362. Asparagine 378 carries N-linked (GlcNAc...) asparagine glycosylation. Residue histidine 415 is part of the active site.

This sequence belongs to the peptidase S10 family. As to expression, ubiquitous.

Its subcellular location is the secreted. Probable carboxypeptidase. This Arabidopsis thaliana (Mouse-ear cress) protein is Serine carboxypeptidase-like 7 (SCPL7).